The sequence spans 896 residues: Protein translocase subunit SecA (896 aa).

Residues glutamine 87, 105–109, and aspartate 507 each bind ATP; that span reads GEGKT. Positions 855–879 are disordered; it reads LSENDEASETQTFRRQEKKIGRNDP. Positions 866–876 are enriched in basic and acidic residues; the sequence is TFRRQEKKIGR. Zn(2+) is bound by residues cysteine 880, cysteine 882, cysteine 891, and histidine 892.

The protein belongs to the SecA family. As to quaternary structure, monomer and homodimer. Part of the essential Sec protein translocation apparatus which comprises SecA, SecYEG and auxiliary proteins SecDF-YajC and YidC. Zn(2+) serves as cofactor.

Its subcellular location is the cell inner membrane. The protein localises to the cytoplasm. It carries out the reaction ATP + H2O + cellular proteinSide 1 = ADP + phosphate + cellular proteinSide 2.. Functionally, part of the Sec protein translocase complex. Interacts with the SecYEG preprotein conducting channel. Has a central role in coupling the hydrolysis of ATP to the transfer of proteins into and across the cell membrane, serving both as a receptor for the preprotein-SecB complex and as an ATP-driven molecular motor driving the stepwise translocation of polypeptide chains across the membrane. This is Protein translocase subunit SecA from Legionella pneumophila (strain Lens).